The following is a 484-amino-acid chain: UDP-N-acetylmuramate--L-alanine ligase (484 aa).

Residue 126–132 (GTHGKTT) coordinates ATP.

It belongs to the MurCDEF family.

Its subcellular location is the cytoplasm. It carries out the reaction UDP-N-acetyl-alpha-D-muramate + L-alanine + ATP = UDP-N-acetyl-alpha-D-muramoyl-L-alanine + ADP + phosphate + H(+). It participates in cell wall biogenesis; peptidoglycan biosynthesis. Functionally, cell wall formation. This Aeromonas hydrophila subsp. hydrophila (strain ATCC 7966 / DSM 30187 / BCRC 13018 / CCUG 14551 / JCM 1027 / KCTC 2358 / NCIMB 9240 / NCTC 8049) protein is UDP-N-acetylmuramate--L-alanine ligase.